The primary structure comprises 121 residues: Small ribosomal subunit protein uS12 (121 aa).

A disordered region spans residues 1 to 25 (MPTINQLVRKNRKQKKSQSKSPVLE). Basic residues predominate over residues 9 to 18 (RKNRKQKKSQ). 3-methylthioaspartic acid is present on Asp89.

This sequence belongs to the universal ribosomal protein uS12 family. In terms of assembly, part of the 30S ribosomal subunit. Contacts proteins S8 and S17. May interact with IF1 in the 30S initiation complex.

Functionally, with S4 and S5 plays an important role in translational accuracy. Interacts with and stabilizes bases of the 16S rRNA that are involved in tRNA selection in the A site and with the mRNA backbone. Located at the interface of the 30S and 50S subunits, it traverses the body of the 30S subunit contacting proteins on the other side and probably holding the rRNA structure together. The combined cluster of proteins S8, S12 and S17 appears to hold together the shoulder and platform of the 30S subunit. This is Small ribosomal subunit protein uS12 from Rhodopirellula baltica (strain DSM 10527 / NCIMB 13988 / SH1).